We begin with the raw amino-acid sequence, 118 residues long: Small integral membrane protein 17 (118 aa).

A disordered region spans residues 1–84 (MQSLRPEQTR…DDESEGSQGF (84 aa)). A compositionally biased stretch (basic and acidic residues) spans 13 to 42 (LEPERTKTLLPRESRAWEKPPHPACTKDWE). A helical transmembrane segment spans residues 96-116 (IVLVVCVLFLFLVLTGMPMMF).

The protein resides in the membrane. The chain is Small integral membrane protein 17 (SMIM17) from Homo sapiens (Human).